Here is a 102-residue protein sequence, read N- to C-terminus: Small ribosomal subunit protein uS10 (102 aa).

The protein belongs to the universal ribosomal protein uS10 family. Part of the 30S ribosomal subunit.

Involved in the binding of tRNA to the ribosomes. The polypeptide is Small ribosomal subunit protein uS10 (Shouchella clausii (strain KSM-K16) (Alkalihalobacillus clausii)).